A 949-amino-acid chain; its full sequence is MAQVAVSTLPVEEESSSETRMVVTFLVSALESMCKELAKSKAEVACIAVYETDVFVVGTERGCAFVNARTDFQKDFAKYCVAEGLCEVKPPCPVNGMQVHSGETEILRKAVEDYFCFCYGKALGTTVMVPVPYEKMLRDQSAVVVQGLPEGVAFQHPENYDLATLKWILENKAGISFIINRPFLGPESQLGGPGMVTDAERSIVSPSESCGPINVKTEPMEDSGISLKAEAVSVKKESEDPNYYQYNMQGSHPSSTSNEVIEMELPMEDSTPLVPSEEPNEDPEAEVKIEGNTNSSSVTNSAAGVEDLNIVQVTVPDNEKERLSSIEKIKQLREQVNDLFSRKFGEAIGVDFPVKVPYRKITFNPGCVVIDGMPPGVVFKAPGYLEISSMRRILEAAEFIKFTVIRPLPGLELSNVGKRKIDQEGRVFQEKWERAYFFVEVQNIPTCLICKQSMSVSKEYNLRRHYQTNHSKHYDQYTERMRDEKLHELKKGLRKYLLGSSDTECPEQKQVFANPSPTQKSPVQPVEDLAGNLWEKLREKIRSFVAYSIAIDEITDINNTTQLAIFIRGVDENFDVSEELLDTVPMTGTKSGNEIFLRVEKSLKKFCINWSRLVSVASTGTPAMVDANNGLVTKLKSRVATFCKGAELKSICCIIHPESLCAQKLKMDHVMDVVVKSVNWICSRGLNHSEFTTLLYELDSQYGSLLYYTEIKWLSRGLVLKRFFESLEEIDSFMSSRGKPLPQLSSIDWIRDLAFLVDMTMHLNALNISLQGHSQIVTQMYDLIRAFLAKLCLWETHLTRNNLAHFPTLKLVSRNESDGLNYIPKIAELKTEFQKRLSDFKLYESELTLFSSPFSTKIDSVHEELQMEVIDLQCNTVLKTKYDKVGIPEFYKYLWGSYPKYKHHCAKILSMFGSTYICEQLFSIMKLSKTKYCSQLKDSQWDSVLHIAT.

GTF2I-like repeat units lie at residues 98 to 192 (QVHS…QLGG) and 323 to 417 (LSSI…SNVG).

Belongs to the TFII-I family. Ubiquitous.

Its subcellular location is the nucleus. The sequence is that of General transcription factor II-I repeat domain-containing protein 2B (GTF2IRD2B) from Homo sapiens (Human).